Consider the following 219-residue polypeptide: Glutathione S-transferase 3 (219 aa).

A GST N-terminal domain is found at 3 to 82; the sequence is DEVVLLDTWA…YIDEVWNDKS (80 aa). Glutathione is bound by residues Ser13, Ile54, and 66-67; that span reads ES. In terms of domain architecture, GST C-terminal spans 88–216; it reads DPYKRSQARF…GLIVELQKTL (129 aa).

Belongs to the GST superfamily. HSP26 family. In terms of assembly, homodimer. degradation; (R)-lactate from methylglyoxal: step 1/2.

It catalyses the reaction RX + glutathione = an S-substituted glutathione + a halide anion + H(+). Conjugation of reduced glutathione to a wide number of exogenous and endogenous hydrophobic electrophiles. Involved in the detoxification of certain herbicides. The chain is Glutathione S-transferase 3 (GST3) from Glycine max (Soybean).